Consider the following 339-residue polypeptide: Methionine import ATP-binding protein MetN 2 (339 aa).

Positions Ile-2–Val-241 constitute an ABC transporter domain. ATP is bound at residue Gly-38–Ser-45.

This sequence belongs to the ABC transporter superfamily. Methionine importer (TC 3.A.1.24) family. As to quaternary structure, the complex is composed of two ATP-binding proteins (MetN), two transmembrane proteins (MetI) and a solute-binding protein (MetQ).

Its subcellular location is the cell membrane. It carries out the reaction L-methionine(out) + ATP + H2O = L-methionine(in) + ADP + phosphate + H(+). It catalyses the reaction D-methionine(out) + ATP + H2O = D-methionine(in) + ADP + phosphate + H(+). Its function is as follows. Part of the ABC transporter complex MetNIQ involved in methionine import. Responsible for energy coupling to the transport system. This chain is Methionine import ATP-binding protein MetN 2, found in Bacillus cereus (strain ATCC 14579 / DSM 31 / CCUG 7414 / JCM 2152 / NBRC 15305 / NCIMB 9373 / NCTC 2599 / NRRL B-3711).